Here is a 71-residue protein sequence, read N- to C-terminus: ATP synthase subunit c (71 aa).

The next 2 helical transmembrane spans lie at 5–25 and 47–67; these read AIGI…AIIV and FIGA…AFLL.

This sequence belongs to the ATPase C chain family. F-type ATPases have 2 components, F(1) - the catalytic core - and F(0) - the membrane proton channel. F(1) has five subunits: alpha(3), beta(3), gamma(1), delta(1), epsilon(1). F(0) has three main subunits: a(1), b(2) and c(10-14). The alpha and beta chains form an alternating ring which encloses part of the gamma chain. F(1) is attached to F(0) by a central stalk formed by the gamma and epsilon chains, while a peripheral stalk is formed by the delta and b chains.

The protein resides in the cell membrane. In terms of biological role, f(1)F(0) ATP synthase produces ATP from ADP in the presence of a proton or sodium gradient. F-type ATPases consist of two structural domains, F(1) containing the extramembraneous catalytic core and F(0) containing the membrane proton channel, linked together by a central stalk and a peripheral stalk. During catalysis, ATP synthesis in the catalytic domain of F(1) is coupled via a rotary mechanism of the central stalk subunits to proton translocation. Key component of the F(0) channel; it plays a direct role in translocation across the membrane. A homomeric c-ring of between 10-14 subunits forms the central stalk rotor element with the F(1) delta and epsilon subunits. The chain is ATP synthase subunit c from Shouchella clausii (strain KSM-K16) (Alkalihalobacillus clausii).